A 228-amino-acid chain; its full sequence is Aquaporin Z 1 (228 aa).

Transmembrane regions (helical) follow at residues 9 to 29 (FLGTFWLVLGGCGSAVLAAAF) and 34 to 54 (IGLLGVSFAFGLTVLTMAYAV). The NPA 1 signature appears at 63 to 65 (NPA). A run of 3 helical transmembrane segments spans residues 82–102 (VGYILAQVTGAIAAAAVLYVI), 129–149 (LTAALVTEVVMTAFFLLIILG), and 156–176 (PVGFAPIAIGLGLTLIHLVSI). Residues 184-186 (NPA) carry the NPA 2 motif. A helical membrane pass occupies residues 204–224 (WLFWVAPLIGAVIAGIVWKIV).

Belongs to the MIP/aquaporin (TC 1.A.8) family. In terms of assembly, homotetramer.

It localises to the cell inner membrane. It carries out the reaction H2O(in) = H2O(out). In terms of biological role, channel that permits osmotically driven movement of water in both directions. It is involved in the osmoregulation and in the maintenance of cell turgor during volume expansion in rapidly growing cells. It mediates rapid entry or exit of water in response to abrupt changes in osmolarity. In Rhizobium meliloti (strain 1021) (Ensifer meliloti), this protein is Aquaporin Z 1.